A 120-amino-acid chain; its full sequence is Large ribosomal subunit protein bL12 (120 aa).

It belongs to the bacterial ribosomal protein bL12 family. In terms of assembly, homodimer. Part of the ribosomal stalk of the 50S ribosomal subunit. Forms a multimeric L10(L12)X complex, where L10 forms an elongated spine to which 2 to 4 L12 dimers bind in a sequential fashion. Binds GTP-bound translation factors.

Functionally, forms part of the ribosomal stalk which helps the ribosome interact with GTP-bound translation factors. Is thus essential for accurate translation. This is Large ribosomal subunit protein bL12 from Lactobacillus helveticus (strain DPC 4571).